The primary structure comprises 335 residues: Glucokinase (335 aa).

11-16 (ADIGGT) lines the ATP pocket.

It belongs to the bacterial glucokinase family.

It is found in the cytoplasm. It catalyses the reaction D-glucose + ATP = D-glucose 6-phosphate + ADP + H(+). The chain is Glucokinase from Stenotrophomonas maltophilia (strain K279a).